A 430-amino-acid chain; its full sequence is Histidine--tRNA ligase (430 aa).

The protein belongs to the class-II aminoacyl-tRNA synthetase family. As to quaternary structure, homodimer.

It is found in the cytoplasm. It catalyses the reaction tRNA(His) + L-histidine + ATP = L-histidyl-tRNA(His) + AMP + diphosphate + H(+). This chain is Histidine--tRNA ligase, found in Chlamydia caviae (strain ATCC VR-813 / DSM 19441 / 03DC25 / GPIC) (Chlamydophila caviae).